A 336-amino-acid polypeptide reads, in one-letter code: Zinc transporter ZIP11 (336 aa).

The next 7 membrane-spanning stretches (helical) occupy residues 12 to 32, 44 to 64, 75 to 95, 188 to 208, 258 to 278, 280 to 300, and 316 to 336; these read LLGT…VFIF, LGFA…APAI, SFAF…VYLA, IMLL…AVGV, WYGQ…TIAI, LAEP…VYVV, and LASW…VGLG.

The protein belongs to the ZIP transporter (TC 2.A.5) family.

Its subcellular location is the cell membrane. The protein resides in the nucleus. The protein localises to the cytoplasm. It is found in the golgi apparatus. Functionally, functions as a cellular zinc transporter. The polypeptide is Zinc transporter ZIP11 (slc39a11) (Xenopus tropicalis (Western clawed frog)).